A 202-amino-acid polypeptide reads, in one-letter code: ATP-dependent Clp protease proteolytic subunit (202 aa).

Residue Ser-106 is the Nucleophile of the active site. His-131 is an active-site residue.

The protein belongs to the peptidase S14 family. Fourteen ClpP subunits assemble into 2 heptameric rings which stack back to back to give a disk-like structure with a central cavity, resembling the structure of eukaryotic proteasomes.

The protein localises to the cytoplasm. The catalysed reaction is Hydrolysis of proteins to small peptides in the presence of ATP and magnesium. alpha-casein is the usual test substrate. In the absence of ATP, only oligopeptides shorter than five residues are hydrolyzed (such as succinyl-Leu-Tyr-|-NHMec, and Leu-Tyr-Leu-|-Tyr-Trp, in which cleavage of the -Tyr-|-Leu- and -Tyr-|-Trp bonds also occurs).. Its function is as follows. Cleaves peptides in various proteins in a process that requires ATP hydrolysis. Has a chymotrypsin-like activity. Plays a major role in the degradation of misfolded proteins. This chain is ATP-dependent Clp protease proteolytic subunit, found in Variovorax paradoxus (strain S110).